Reading from the N-terminus, the 571-residue chain is Sialate:O-sulfotransferase 2 (571 aa).

Residues Met1–Val20 are Cytoplasmic-facing. Residues Arg21 to Val43 form a helical membrane-spanning segment. The Extracellular portion of the chain corresponds to Gly44 to Arg571. WSC domains are found at residues Lys133 to Gln225 and Ser236 to Gln330. Asn195 and Asn248 each carry an N-linked (GlcNAc...) asparagine glycan.

This sequence belongs to the WSCD family.

The protein resides in the golgi apparatus membrane. In terms of biological role, sialate:O-sulfotransferase that catalyzes 8-O-sulfation at the Sia-glycan level using 3'-phosphoadenosine 5'-phosphosulfate (PAPS) as a donor, forming 8-O-sulfated Sia (Sia8S)-glycans. Displays selectivity toward glycoproteins such as TF/transferrin. This chain is Sialate:O-sulfotransferase 2 (Wscd2), found in Mus musculus (Mouse).